A 205-amino-acid polypeptide reads, in one-letter code: UPF0111 protein YkaA (205 aa).

It belongs to the UPF0111 family.

This chain is UPF0111 protein YkaA (ykaA), found in Bacillus subtilis (strain 168).